The following is a 250-amino-acid chain: Ribosomal RNA small subunit methyltransferase G (250 aa).

S-adenosyl-L-methionine contacts are provided by residues G78, L83, A129–E130, and R144. A disordered region spans residues I224–T250. Basic residues predominate over residues P227 to T250.

Belongs to the methyltransferase superfamily. RNA methyltransferase RsmG family.

The protein resides in the cytoplasm. Functionally, specifically methylates the N7 position of guanine in position 518 of 16S rRNA. This Nocardioides sp. (strain ATCC BAA-499 / JS614) protein is Ribosomal RNA small subunit methyltransferase G.